The chain runs to 207 residues: MEKFTVLTAIAAPLPEANIDTDKIIPARFLKTTKRSGLGVHAFDGMRYNPDGSEKPDFVLNQAPYRQAGILITYDNLGCGSSREHAPWALLDFGIRCVIAPSFADIFFNNCFKNGILPIRLPREVCDALMDDARLGGNGRLTVDLERQVVIRPDGAEIAFEIDPLRRHLLLEGLDDIGQTLQHEGAIDTFEATRERAQPWQTRIVID.

This sequence belongs to the LeuD family. LeuD type 1 subfamily. In terms of assembly, heterodimer of LeuC and LeuD.

The catalysed reaction is (2R,3S)-3-isopropylmalate = (2S)-2-isopropylmalate. The protein operates within amino-acid biosynthesis; L-leucine biosynthesis; L-leucine from 3-methyl-2-oxobutanoate: step 2/4. Functionally, catalyzes the isomerization between 2-isopropylmalate and 3-isopropylmalate, via the formation of 2-isopropylmaleate. In Gluconacetobacter diazotrophicus (strain ATCC 49037 / DSM 5601 / CCUG 37298 / CIP 103539 / LMG 7603 / PAl5), this protein is 3-isopropylmalate dehydratase small subunit.